We begin with the raw amino-acid sequence, 1658 residues long: Protein TIC 214 (1658 aa).

6 helical membrane-spanning segments follow: residues 28-48, 52-72, 82-102, 130-150, 165-185, and 199-219; these read FGLY…ILTI, LLGG…GQLI, IYVM…YMLF, IFLD…SPVF, ISFV…FINL, and VNYP…ILAL.

The protein belongs to the TIC214 family. Part of the Tic complex.

Its subcellular location is the plastid. It is found in the chloroplast inner membrane. In terms of biological role, involved in protein precursor import into chloroplasts. May be part of an intermediate translocation complex acting as a protein-conducting channel at the inner envelope. This Huperzia lucidula (Shining clubmoss) protein is Protein TIC 214.